The following is a 154-amino-acid chain: 6,7-dimethyl-8-ribityllumazine synthase (154 aa).

5-amino-6-(D-ribitylamino)uracil contacts are provided by residues Phe23, 57–59 (AFE), and 81–83 (AII). (2S)-2-hydroxy-3-oxobutyl phosphate is bound at residue 86–87 (ST). His89 acts as the Proton donor in catalysis. Phe114 is a binding site for 5-amino-6-(D-ribitylamino)uracil. Residue Arg128 participates in (2S)-2-hydroxy-3-oxobutyl phosphate binding.

The protein belongs to the DMRL synthase family.

The catalysed reaction is (2S)-2-hydroxy-3-oxobutyl phosphate + 5-amino-6-(D-ribitylamino)uracil = 6,7-dimethyl-8-(1-D-ribityl)lumazine + phosphate + 2 H2O + H(+). It functions in the pathway cofactor biosynthesis; riboflavin biosynthesis; riboflavin from 2-hydroxy-3-oxobutyl phosphate and 5-amino-6-(D-ribitylamino)uracil: step 1/2. Functionally, catalyzes the formation of 6,7-dimethyl-8-ribityllumazine by condensation of 5-amino-6-(D-ribitylamino)uracil with 3,4-dihydroxy-2-butanone 4-phosphate. This is the penultimate step in the biosynthesis of riboflavin. This is 6,7-dimethyl-8-ribityllumazine synthase from Nitratiruptor sp. (strain SB155-2).